Reading from the N-terminus, the 607-residue chain is Autophagy-related protein 16-1 (607 aa).

Residues 13–43 are interaction with ATG5; sequence WKRHISEQLRRRDRLQRQAFEEIILQYNKLL. Residues 78-230 adopt a coiled-coil conformation; sequence NDNQLQEMAQ…QKELAEAAKE (153 aa). The residue at position 139 (serine 139) is a Phosphoserine; by CK2. Residues 207–230 are WIPI2-binding; the sequence is AENEKDSRRRQARLQKELAEAAKE. Residues 230 to 242 form an RB1CC1-binding region; sequence EPLPVEQDDDIEV. 2 positions are modified to phosphoserine: serine 269 and serine 287. The Caspase cleavage signature appears at 296-299; it reads DNVD. WD repeat units follow at residues 320 to 359, 364 to 403, 406 to 445, 447 to 484, 486 to 525, 532 to 573, and 575 to 607; these read AHDG…CEFK, GSNA…LRHT, GHSG…CIKT, FAGS…IVRE, ELLG…IKQT, KCGS…KVLS, and QHSS…WAQY.

The protein belongs to the WD repeat ATG16 family. Homodimer. Homooligomer. Heterooligomer with ATG16L2. Interacts with WIPI1. Interacts with WIPI2. Interacts with RB1CC1; the interaction is required for ULK1 complex-dependent autophagy. Interacts with ATG5. Part of the minor complex composed of 4 sets of ATG12-ATG5 and ATG16L1 (400 kDa); this complex interacts with ATG3 leading to disruption of ATG7 interaction and promotion of ATG8-like proteins lipidation. Part of the major complex composed of 8 sets of ATG12-ATG5 and ATG16L1 (800 kDa). Interacts with RAB33B (GTP- and GDP-bound forms); the complex consists of a tetramer where two RAB33B molecules bind independently one molecule of the ATG16L1 homodimer; the interaction promotes ATG12-ATG5-ATG16L1 complex recruitment to phagophores. Interacts (via WD repeats) with TMEM59; the interaction mediates unconventional autophagic activity of TMEM59. Interacts with TLR2. Interacts (via WD repeats) with MEFV. Interacts with PPP1CA; the interaction dephosphorylates ATG16L1 causing dissociation of ATG12-ATG5-ATG16L1 complex. Interacts (via N-terminal) with CLTC. Interacts with NOD1. Interacts with NOD2. Interacts with TUFM. Interacts with TRIM16. Interacts (via WD repeats) with SPATA33. Interacts with IRGM. Post-translationally, proteolytic cleavage by activated CASP3 leads to degradation and may regulate autophagy upon cellular stress and apoptotic stimuli. Phosphorylation at Ser-139 promotes association with the ATG12-ATG5 conjugate to form the ATG12-ATG5-ATG16L1 complex.

The protein resides in the cytoplasm. It is found in the preautophagosomal structure membrane. The protein localises to the endosome membrane. Its subcellular location is the lysosome membrane. In terms of biological role, plays an essential role in both canonical and non-canonical autophagy: interacts with ATG12-ATG5 to mediate the lipidation to ATG8 family proteins (MAP1LC3A, MAP1LC3B, MAP1LC3C, GABARAPL1, GABARAPL2 and GABARAP). Acts as a molecular hub, coordinating autophagy pathways via distinct domains that support either canonical or non-canonical signaling. During canonical autophagy, interacts with ATG12-ATG5 to mediate the conjugation of phosphatidylethanolamine (PE) to ATG8 proteins, to produce a membrane-bound activated form of ATG8. Thereby, controls the elongation of the nascent autophagosomal membrane. As part of the ATG8 conjugation system with ATG5 and ATG12, required for recruitment of LRRK2 to stressed lysosomes and induction of LRRK2 kinase activity in response to lysosomal stress. Also involved in non-canonical autophagy, a parallel pathway involving conjugation of ATG8 proteins to single membranes at endolysosomal compartments, probably by catalyzing conjugation of phosphatidylserine (PS) to ATG8. Non-canonical autophagy plays a key role in epithelial cells to limit lethal infection by influenza A (IAV) virus. Regulates mitochondrial antiviral signaling (MAVS)-dependent type I interferon (IFN-I) production. Negatively regulates NOD1- and NOD2-driven inflammatory cytokine response. Instead, promotes an autophagy-dependent antibacterial pathway together with NOD1 or NOD2. Plays a role in regulating morphology and function of Paneth cell. The chain is Autophagy-related protein 16-1 from Homo sapiens (Human).